The primary structure comprises 181 residues: Small ribosomal subunit protein bS16 (181 aa).

Residues 150-181 (KKAAEEAAKAAAEAPAEEAAPAEETATEAAAE) form a disordered region. Residues 158–181 (KAAAEAPAEEAAPAEETATEAAAE) show a composition bias toward low complexity.

The protein belongs to the bacterial ribosomal protein bS16 family.

This Bacteroides fragilis (strain YCH46) protein is Small ribosomal subunit protein bS16.